Here is an 810-residue protein sequence, read N- to C-terminus: Type I restriction enzyme EcoAI endonuclease subunit (810 aa).

Residues 183 to 343 enclose the Helicase ATP-binding domain; sequence EAVSNGQNRV…TDYFGDPVYV (161 aa). Residue 197 to 203 coordinates ATP; it reads ATGTGKT. Positions 412-575 constitute a Helicase C-terminal domain; the sequence is TITDYLKRTN…DIADPESDFE (164 aa). Positions 578–588 are enriched in acidic residues; sequence LEEISEHDEEQ. Residues 578-608 are disordered; that stretch reads LEEISEHDEEQVTGVDEPPAPPYQVTDTDDV.

The protein belongs to the HsdR family. As to quaternary structure, the type I restriction/modification system is composed of three polypeptides R, M and S. The restriction enzyme has stoichiometry R(2)M(2)S(1) while the methyltransferase is M(2)S(1).

The enzyme catalyses Endonucleolytic cleavage of DNA to give random double-stranded fragments with terminal 5'-phosphates, ATP is simultaneously hydrolyzed.. Its function is as follows. The subtype B restriction (R) subunit of a type I restriction enzyme that recognizes 5'-GAGN(7)GTCA-3' and cleaves a random distance away. Subunit R is required for both nuclease and ATPase activities, but not for modification. After locating a non-methylated recognition site, the enzyme complex serves as a molecular motor that translocates DNA in an ATP-dependent manner until a collision occurs that triggers cleavage. This Escherichia coli protein is Type I restriction enzyme EcoAI endonuclease subunit.